The primary structure comprises 130 residues: Small ribosomal subunit protein uS8 (130 aa).

Belongs to the universal ribosomal protein uS8 family. In terms of assembly, part of the 30S ribosomal subunit. Contacts proteins S5 and S12.

One of the primary rRNA binding proteins, it binds directly to 16S rRNA central domain where it helps coordinate assembly of the platform of the 30S subunit. The protein is Small ribosomal subunit protein uS8 of Moorella thermoacetica (strain ATCC 39073 / JCM 9320).